The following is a 553-amino-acid chain: HTH-type transcriptional regulator SgrR (553 aa).

Residues 1-113 (MSTSRLQQQF…RQMLLSQLGR (113 aa)) form the HTH marR-type domain. A DNA-binding region (H-T-H motif) is located at residues 26 to 49 (LQALAEVLNCSRRHVRSLLGKMQH). The interval 163-494 (ELEPDLSHHW…EELHQDIESW (332 aa)) is solute-binding.

Activates the small RNA gene sgrS under glucose-phosphate stress conditions as well as yfdZ. Represses its own transcription under both stress and non-stress conditions. Might act as a sensor of the intracellular accumulation of phosphoglucose by binding these molecules in its C-terminal solute-binding domain. This is HTH-type transcriptional regulator SgrR from Yersinia pseudotuberculosis serotype I (strain IP32953).